A 726-amino-acid polypeptide reads, in one-letter code: Disintegrin and metalloproteinase domain-containing protein 20 (726 aa).

The signal sequence occupies residues 1–31 (MAVGEPLVHIRVTLLLLWFGMFLSISGHSQA). Residues 32 to 206 (RPSQYFTSPE…SSFVGWWTHQ (175 aa)) constitute a propeptide that is removed on maturation. The Cysteine switch motif lies at 171–178 (MRCGLTEE). Cys173 provides a ligand contact to Zn(2+). N-linked (GlcNAc...) asparagine glycans are attached at residues Asn191 and Asn226. Residues 207 to 400 (RFVELVVVVD…SGLCIQPPPY (194 aa)) enclose the Peptidase M12B domain. Residues 207–693 (RFVELVVVVD…GLNVMGKLRY (487 aa)) lie on the Extracellular side of the membrane. Intrachain disulfides connect Cys317–Cys394, Cys357–Cys379, and Cys359–Cys364. Residue His342 coordinates Zn(2+). Residue Glu343 is part of the active site. His346 and His352 together coordinate Zn(2+). Asn378, Asn438, Asn479, and Asn587 each carry an N-linked (GlcNAc...) asparagine glycan. Positions 407 to 493 (LKYCGNLVVE…QCPDDVYVQD (87 aa)) constitute a Disintegrin domain. Cys465 and Cys485 are oxidised to a cystine. Cystine bridges form between Cys635–Cys646, Cys640–Cys652, and Cys654–Cys663. Positions 635-663 (CQPKTCNMRGICNNKQHCHCNHEWAPPYC) constitute an EGF-like domain. A helical membrane pass occupies residues 694-714 (LSLLCLLPLVAFLLFCLHVLF). Residues 715 to 726 (KKRTKSKEDEEG) are Cytoplasmic-facing.

Requires Zn(2+) as cofactor. Has no obvious cleavage site for furin endopeptidase, suggesting that the proteolytic processing is regulated. As to expression, testis specific.

Its subcellular location is the membrane. May be involved in sperm maturation and/or fertilization. The polypeptide is Disintegrin and metalloproteinase domain-containing protein 20 (ADAM20) (Homo sapiens (Human)).